A 567-amino-acid chain; its full sequence is Urease subunit alpha (567 aa).

In terms of domain architecture, Urease spans 129-567 (GGVDTHIHWI…LPMAQRYFLF (439 aa)). The Ni(2+) site is built by H134, H136, and K217. At K217 the chain carries N6-carboxylysine. H219 serves as a coordination point for substrate. H246 and H272 together coordinate Ni(2+). H320 functions as the Proton donor in the catalytic mechanism. D360 is a binding site for Ni(2+).

This sequence belongs to the metallo-dependent hydrolases superfamily. Urease alpha subunit family. Heterotrimer of UreA (gamma), UreB (beta) and UreC (alpha) subunits. Three heterotrimers associate to form the active enzyme. The cofactor is Ni cation. In terms of processing, carboxylation allows a single lysine to coordinate two nickel ions.

Its subcellular location is the cytoplasm. It carries out the reaction urea + 2 H2O + H(+) = hydrogencarbonate + 2 NH4(+). It functions in the pathway nitrogen metabolism; urea degradation; CO(2) and NH(3) from urea (urease route): step 1/1. The sequence is that of Urease subunit alpha from Citrobacter koseri (strain ATCC BAA-895 / CDC 4225-83 / SGSC4696).